A 334-amino-acid polypeptide reads, in one-letter code: MKVVFFGTPQFAVPSLERLLEHSDIDVVAVVTQPDKPRGRGKQLIPSPIKKVALDHQIPIWQPKRVKKNAQTLTKLRETNADAFAVVAYGQILSAEILQMPKLACINVHGSILPKYRGAAPIQWSIYHGETQTGITTMLMDEGMDTGAMLLKAYTPIQLLDNADKIATTLANQGADLLIETLLKLEQGELNPESQNSELATYAPLIQKEDYLINWTRHALQIHNQVRGFYPNCFTTFREQPLKILATAPLGEAYWEHLPSNIAQKIQPQWTTLSSLTSSPGEVVNLIKNLGPIVQTGEGLLLLLQVQLSGKRPQSGWDFVNGTRLSVGEKFLMV.

111 to 114 (SILP) contributes to the (6S)-5,6,7,8-tetrahydrofolate binding site.

Belongs to the Fmt family.

The catalysed reaction is L-methionyl-tRNA(fMet) + (6R)-10-formyltetrahydrofolate = N-formyl-L-methionyl-tRNA(fMet) + (6S)-5,6,7,8-tetrahydrofolate + H(+). In terms of biological role, attaches a formyl group to the free amino group of methionyl-tRNA(fMet). The formyl group appears to play a dual role in the initiator identity of N-formylmethionyl-tRNA by promoting its recognition by IF2 and preventing the misappropriation of this tRNA by the elongation apparatus. This Gloeothece citriformis (strain PCC 7424) (Cyanothece sp. (strain PCC 7424)) protein is Methionyl-tRNA formyltransferase.